We begin with the raw amino-acid sequence, 479 residues long: Probable aspartic-type endopeptidase OPSB (479 aa).

An N-terminal signal peptide occupies residues 1–19 (MRGDSFIWSLTTAASLLYA). The Peptidase A1 domain maps to 58–393 (SGKTVSQDLD…DLDNNEISIA (336 aa)). An N-linked (GlcNAc...) asparagine glycan is attached at Asn68. The active site involves Asp76. N-linked (GlcNAc...) asparagine glycosylation is present at Asn121. The active site involves Asp275. Asn398 carries N-linked (GlcNAc...) asparagine glycosylation. The interval 435–454 (LSGIETGVPGARPTSRGAAP) is disordered. Gly451 carries GPI-anchor amidated glycine lipidation. The propeptide at 452–479 (AAPTMRPDVTFGVAAAGLAGAGILFAFM) is removed in mature form.

Belongs to the peptidase A1 family.

It localises to the cell membrane. Probable GPI-anchored aspartic-type endopeptidase which contributes to virulence. In Arthroderma otae (strain ATCC MYA-4605 / CBS 113480) (Microsporum canis), this protein is Probable aspartic-type endopeptidase OPSB (OPSB).